The chain runs to 188 residues: Mitochondrial import receptor subunit TOM20 homolog (188 aa).

Topologically, residues 1–12 (MTDTLFGFNKSN) are mitochondrial intermembrane. A helical membrane pass occupies residues 13–31 (VVLAAGVAGAAFLGYCIYF). The Cytoplasmic portion of the chain corresponds to 32 to 188 (DHKRINAPDY…ELIDDTDDLE (157 aa)). 2 disordered regions span residues 48-67 (KRRAQAGSGGMAARRPPAGG) and 155-188 (ADEAENEPPLVQYLGDGPPPAQIQELIDDTDDLE). Low complexity predominate over residues 58–67 (MAARRPPAGG).

It belongs to the Tom20 family. Forms part of the preprotein translocase complex of the outer mitochondrial membrane (TOM complex).

Its subcellular location is the mitochondrion outer membrane. In terms of biological role, central component of the receptor complex responsible for the recognition and translocation of cytosolically synthesized mitochondrial preproteins. Together with TOM22 functions as the transit peptide receptor at the surface of the mitochondrion outer membrane and facilitates the movement of preproteins into the translocation pore. This Caenorhabditis briggsae protein is Mitochondrial import receptor subunit TOM20 homolog (tomm-20).